A 477-amino-acid chain; its full sequence is ETS translocation variant 1 (477 aa).

Residue Ser94 is modified to Phosphoserine. Residues 128 to 178 (PQVGMRPSNPPTPSSTPVSPLHHASPNSAHTSKPDRAFPAHLPPSQPIQDS) form a disordered region. 2 positions are modified to phosphoserine; by RPS6KA1 and RPS6KA5: Ser191 and Ser216. A Glycyl lysine isopeptide (Lys-Gly) (interchain with G-Cter in SUMO2) cross-link involves residue Lys317. The ETS DNA-binding region spans 335–415 (LQLWQFLVAL…AGERYVYKFV (81 aa)).

This sequence belongs to the ETS family. In terms of processing, sumoylated. Phosphorylated at Ser-191 and Ser-216 by RPS6KA1 and RPS6KA5; phosphorylation activates transcriptional activity.

Its subcellular location is the nucleus. In terms of biological role, transcriptional activator that binds to DNA sequences containing the consensus pentanucleotide 5'-CGGA[AT]-3'. Required for olfactory dopaminergic neuron differentiation; may directly activate expression of tyrosine hydroxylase (TH). The protein is ETS translocation variant 1 (ETV1) of Bos taurus (Bovine).